Here is a 96-residue protein sequence, read N- to C-terminus: MPKTQTLEQTKLSEPKMYKVILLNDDVTTMDFVIEILMNIFHQNLEKASQTMLEIHHNGSGICGIYTQEIALSKQKKVIDAAKLANFPLQAKVEEE.

It belongs to the ClpS family. Binds to the N-terminal domain of the chaperone ClpA.

Its function is as follows. Involved in the modulation of the specificity of the ClpAP-mediated ATP-dependent protein degradation. This is ATP-dependent Clp protease adapter protein ClpS from Campylobacter jejuni subsp. jejuni serotype O:6 (strain 81116 / NCTC 11828).